The sequence spans 183 residues: UPF0316 protein EF_1609 (183 aa).

Helical transmembrane passes span 1–21 (MVVD…YITL), 35–55 (VIAP…LSMV), and 62–82 (PLNL…GIKI).

This sequence belongs to the UPF0316 family.

It is found in the cell membrane. The sequence is that of UPF0316 protein EF_1609 from Enterococcus faecalis (strain ATCC 700802 / V583).